A 439-amino-acid polypeptide reads, in one-letter code: Trigger factor (439 aa).

The PPIase FKBP-type domain maps to 162–247; the sequence is GDTVTIDYVG…IHEVKAKQLP (86 aa).

This sequence belongs to the FKBP-type PPIase family. Tig subfamily.

Its subcellular location is the cytoplasm. It carries out the reaction [protein]-peptidylproline (omega=180) = [protein]-peptidylproline (omega=0). Involved in protein export. Acts as a chaperone by maintaining the newly synthesized protein in an open conformation. Functions as a peptidyl-prolyl cis-trans isomerase. This chain is Trigger factor, found in Lactobacillus delbrueckii subsp. bulgaricus (strain ATCC 11842 / DSM 20081 / BCRC 10696 / JCM 1002 / NBRC 13953 / NCIMB 11778 / NCTC 12712 / WDCM 00102 / Lb 14).